The chain runs to 910 residues: MVSLGGLARKIFGSSNERRVRALQPRAEQIGALEKEMQALSDEALRGKTDEFRKKLADGADLDDLLVPAFAVVREAARRVLGLRPFDVQLIGGMVLHQGAIAEMKTGEGKTLVATLPVYLNALTGKGVHVVTVNDYLARRDAEWMGRVYGFLGLTTGVIVHGLSDEERRAAYACDVTYATNNELGFDYLRDNMKYERAQMVQRGHAYAIVDEVDSILVDEARTPLIISGPLDDRSELYNTIDTFILKLEPADYEVDEKQRTATFTEEGTEKVENLLREANLFKGDSLYDVENVAIVHHLNNALKAHRLFQRDKDYIVRNDEVIIIDEFTGRMMPGRRYSDGLHQALEAKEHVKIQPENQTLASITFQNYFRMYGKLAGMTGTASTEAEEFGNIYGLDVVEIPTNLPVSRIDEDDEVYRTVEEKYRAIVREIKEAREKGQPILVGTTSIEKSEYLAERLRKDGLKDFEILNARHHEREAYIVSQAGKPGAITIATNMAGRGTDIQLGGNADMRIHQELGDMPAGPERDAKEKAIREDVQRLKEKALAAGGLYVLATERHESRRIDNQLRGRSGRQGDPGRSKFFLSLQDDLMRIFGSDRMDGMLQKLGLKEDEAIVHPWINKALEKAQKKVEARNFDIRKNLLKYDDVMNDQRKVVFEQRIELMDGENLSETVAEMRQDVIDDLVERHIPANAYAEQWDAKGLKEGVLQYLNLDLPIDEWVKEEGIAEDDIRERITEAANKAAAERAERFGPDIMTYVEKSIVLQTLDHLWREHLVNLDHLRSVIGFRGYAQRDPLNEYKSEAFELFQAMLGNLRQAVTAQLMRVELVREAAEAPPPPAPPAMQAHHLDATTGEDEFANGDTMTLARADARIVPAEQRDPNDPSTWGKVGRNEACPCGSGKKYKHCHGTFA.

Residues Q89, 107 to 111 (GEGKT), and D502 contribute to the ATP site. Residues C894, C896, C905, and H906 each coordinate Zn(2+).

The protein belongs to the SecA family. In terms of assembly, monomer and homodimer. Part of the essential Sec protein translocation apparatus which comprises SecA, SecYEG and auxiliary proteins SecDF-YajC and YidC. Requires Zn(2+) as cofactor.

It is found in the cell inner membrane. The protein localises to the cytoplasm. It carries out the reaction ATP + H2O + cellular proteinSide 1 = ADP + phosphate + cellular proteinSide 2.. Its function is as follows. Part of the Sec protein translocase complex. Interacts with the SecYEG preprotein conducting channel. Has a central role in coupling the hydrolysis of ATP to the transfer of proteins into and across the cell membrane, serving both as a receptor for the preprotein-SecB complex and as an ATP-driven molecular motor driving the stepwise translocation of polypeptide chains across the membrane. The polypeptide is Protein translocase subunit SecA (Chelativorans sp. (strain BNC1)).